We begin with the raw amino-acid sequence, 368 residues long: D-alanine--D-alanine ligase (368 aa).

An ATP-grasp domain is found at 141-350 (KMIWDYSGLP…YNELIMHLIE (210 aa)). 176-231 (EKDLEYPLFIKPCRAGSSVGAGMVKNRNELLEQAEESFLWDNKILVEACIEAREVE) is an ATP binding site. D303, E317, and N319 together coordinate Mg(2+).

It belongs to the D-alanine--D-alanine ligase family. Mg(2+) serves as cofactor. Mn(2+) is required as a cofactor.

The protein localises to the cytoplasm. It catalyses the reaction 2 D-alanine + ATP = D-alanyl-D-alanine + ADP + phosphate + H(+). Its pathway is cell wall biogenesis; peptidoglycan biosynthesis. Its function is as follows. Cell wall formation. The chain is D-alanine--D-alanine ligase from Treponema denticola (strain ATCC 35405 / DSM 14222 / CIP 103919 / JCM 8153 / KCTC 15104).